A 372-amino-acid polypeptide reads, in one-letter code: Peroxisomal biogenesis factor 3 (372 aa).

Residues 1 to 15 (MLRSMWNFLKRHKKK) are Cytoplasmic-facing. The segment at 1–45 (MLRSMWNFLKRHKKKCIFLGTVLGGVYILGKYGQKKIREIQEREA) is targeting to peroxisomes. A helical transmembrane segment spans residues 16–36 (CIFLGTVLGGVYILGKYGQKK). Residues 37-116 (IREIQEREAA…LKIISFTRSI (80 aa)) lie on the Peroxisomal side of the membrane. Residues 117–140 (VAVYSTCMLVVLLRVQLNIIGGYI) form a helical membrane-spanning segment. Residues 120 to 136 (YSTCMLVVLLRVQLNII) are interaction with PEX19. Residues 141–372 (YLDNATVGKN…AFSTPQQLEK (232 aa)) are Cytoplasmic-facing.

This sequence belongs to the peroxin-3 family. As to quaternary structure, interacts with PEX19. Identified in all tissues analyzed, with the strongest expression in liver and in testis.

It localises to the peroxisome membrane. In terms of biological role, involved in peroxisome biosynthesis and integrity. Assembles membrane vesicles before the matrix proteins are translocated. As a docking factor for PEX19, is necessary for the import of peroxisomal membrane proteins in the peroxisomes. This chain is Peroxisomal biogenesis factor 3 (Pex3), found in Mus musculus (Mouse).